An 86-amino-acid polypeptide reads, in one-letter code: Small ribosomal subunit protein uS17 (86 aa).

This sequence belongs to the universal ribosomal protein uS17 family. In terms of assembly, part of the 30S ribosomal subunit.

Functionally, one of the primary rRNA binding proteins, it binds specifically to the 5'-end of 16S ribosomal RNA. The protein is Small ribosomal subunit protein uS17 of Streptococcus pyogenes serotype M3 (strain ATCC BAA-595 / MGAS315).